Consider the following 473-residue polypeptide: Tryptophanase (473 aa).

The residue at position 270 (lysine 270) is an N6-(pyridoxal phosphate)lysine.

It belongs to the beta-eliminating lyase family. Homotetramer. Pyridoxal 5'-phosphate is required as a cofactor.

It catalyses the reaction L-tryptophan + H2O = indole + pyruvate + NH4(+). It functions in the pathway amino-acid degradation; L-tryptophan degradation via pyruvate pathway; indole and pyruvate from L-tryptophan: step 1/1. This Vibrio vulnificus (strain CMCP6) protein is Tryptophanase.